A 338-amino-acid chain; its full sequence is Phenylalanine--tRNA ligase alpha subunit (338 aa).

E253 serves as a coordination point for Mg(2+).

The protein belongs to the class-II aminoacyl-tRNA synthetase family. Phe-tRNA synthetase alpha subunit type 1 subfamily. As to quaternary structure, tetramer of two alpha and two beta subunits. Mg(2+) is required as a cofactor.

Its subcellular location is the cytoplasm. It catalyses the reaction tRNA(Phe) + L-phenylalanine + ATP = L-phenylalanyl-tRNA(Phe) + AMP + diphosphate + H(+). The sequence is that of Phenylalanine--tRNA ligase alpha subunit from Pelobacter propionicus (strain DSM 2379 / NBRC 103807 / OttBd1).